The primary structure comprises 332 residues: UDP-N-acetylenolpyruvoylglucosamine reductase (332 aa).

An FAD-binding PCMH-type domain is found at 45-243 (RAGGHAAYFY…LGTRIKTQPL (199 aa)). The active site involves Arg-194. The active-site Proton donor is the Ser-250. The active site involves Glu-320.

This sequence belongs to the MurB family. FAD is required as a cofactor.

The protein resides in the cytoplasm. It catalyses the reaction UDP-N-acetyl-alpha-D-muramate + NADP(+) = UDP-N-acetyl-3-O-(1-carboxyvinyl)-alpha-D-glucosamine + NADPH + H(+). The protein operates within cell wall biogenesis; peptidoglycan biosynthesis. In terms of biological role, cell wall formation. This is UDP-N-acetylenolpyruvoylglucosamine reductase from Nitrosomonas eutropha (strain DSM 101675 / C91 / Nm57).